The primary structure comprises 207 residues: Proteasome subunit beta 1 (207 aa).

Residues 1-9 (MWALDKIKG) constitute a propeptide, removed in mature form; by autocatalysis. The active-site Nucleophile is the T10.

It belongs to the peptidase T1B family. The 20S proteasome core is composed of 14 alpha and 14 beta subunits that assemble into four stacked heptameric rings, resulting in a barrel-shaped structure. The two inner rings, each composed of seven catalytic beta subunits, are sandwiched by two outer rings, each composed of seven alpha subunits. The catalytic chamber with the active sites is on the inside of the barrel. Has a gated structure, the ends of the cylinder being occluded by the N-termini of the alpha-subunits. Is capped at one or both ends by the proteasome regulatory ATPase, PAN.

It localises to the cytoplasm. It carries out the reaction Cleavage of peptide bonds with very broad specificity.. The formation of the proteasomal ATPase PAN-20S proteasome complex, via the docking of the C-termini of PAN into the intersubunit pockets in the alpha-rings, triggers opening of the gate for substrate entry. Interconversion between the open-gate and close-gate conformations leads to a dynamic regulation of the 20S proteasome proteolysis activity. In terms of biological role, component of the proteasome core, a large protease complex with broad specificity involved in protein degradation. The chain is Proteasome subunit beta 1 from Thermococcus sibiricus (strain DSM 12597 / MM 739).